Reading from the N-terminus, the 279-residue chain is Bifunctional protein FolD (279 aa).

NADP(+) contacts are provided by residues 165–167 (GRS), Ser-190, and Ile-231.

It belongs to the tetrahydrofolate dehydrogenase/cyclohydrolase family. As to quaternary structure, homodimer.

The enzyme catalyses (6R)-5,10-methylene-5,6,7,8-tetrahydrofolate + NADP(+) = (6R)-5,10-methenyltetrahydrofolate + NADPH. The catalysed reaction is (6R)-5,10-methenyltetrahydrofolate + H2O = (6R)-10-formyltetrahydrofolate + H(+). It functions in the pathway one-carbon metabolism; tetrahydrofolate interconversion. Its function is as follows. Catalyzes the oxidation of 5,10-methylenetetrahydrofolate to 5,10-methenyltetrahydrofolate and then the hydrolysis of 5,10-methenyltetrahydrofolate to 10-formyltetrahydrofolate. This is Bifunctional protein FolD from Halalkalibacterium halodurans (strain ATCC BAA-125 / DSM 18197 / FERM 7344 / JCM 9153 / C-125) (Bacillus halodurans).